The following is a 30-amino-acid chain: U1-poneritoxin-Ni3d (30 aa).

The protein belongs to the ponericin-G family. In terms of tissue distribution, expressed by the venom gland.

The protein localises to the secreted. Has activity against some Gram-positive bacteria and S.cerevisiae. Has a non-hemolytic activity. In Neoponera inversa (Ant), this protein is U1-poneritoxin-Ni3d.